Here is a 128-residue protein sequence, read N- to C-terminus: MARVKRAVNAHKKRRTMLERASGYRGQRSRLYRKAKEQMLHSFTYNYQHRHKRKGDFRRLWITRINAAARANGMTYNRFMQGLKLAGVEVDRRMLAEIAVSDAATFAVLVKTAREALPADVNAPAASR.

Belongs to the bacterial ribosomal protein bL20 family.

Functionally, binds directly to 23S ribosomal RNA and is necessary for the in vitro assembly process of the 50S ribosomal subunit. It is not involved in the protein synthesizing functions of that subunit. The chain is Large ribosomal subunit protein bL20 from Micrococcus luteus (strain ATCC 4698 / DSM 20030 / JCM 1464 / CCM 169 / CCUG 5858 / IAM 1056 / NBRC 3333 / NCIMB 9278 / NCTC 2665 / VKM Ac-2230) (Micrococcus lysodeikticus).